The sequence spans 186 residues: Elongation factor P (186 aa).

It belongs to the elongation factor P family.

The protein resides in the cytoplasm. It participates in protein biosynthesis; polypeptide chain elongation. Its function is as follows. Involved in peptide bond synthesis. Stimulates efficient translation and peptide-bond synthesis on native or reconstituted 70S ribosomes in vitro. Probably functions indirectly by altering the affinity of the ribosome for aminoacyl-tRNA, thus increasing their reactivity as acceptors for peptidyl transferase. The sequence is that of Elongation factor P from Thiobacillus denitrificans (strain ATCC 25259 / T1).